Reading from the N-terminus, the 511-residue chain is Maturase K (511 aa).

The protein belongs to the intron maturase 2 family. MatK subfamily.

The protein localises to the plastid. It localises to the chloroplast. Its function is as follows. Usually encoded in the trnK tRNA gene intron. Probably assists in splicing its own and other chloroplast group II introns. This chain is Maturase K, found in Hordeum bulbosum (Bulbous barley).